The following is a 178-amino-acid chain: Peptide deformylase (178 aa).

Positions 102 and 144 each coordinate Fe cation. Glu145 is an active-site residue. His148 is a binding site for Fe cation.

It belongs to the polypeptide deformylase family. The cofactor is Fe(2+).

It carries out the reaction N-terminal N-formyl-L-methionyl-[peptide] + H2O = N-terminal L-methionyl-[peptide] + formate. Removes the formyl group from the N-terminal Met of newly synthesized proteins. Requires at least a dipeptide for an efficient rate of reaction. N-terminal L-methionine is a prerequisite for activity but the enzyme has broad specificity at other positions. This is Peptide deformylase from Leptospira borgpetersenii serovar Hardjo-bovis (strain JB197).